The sequence spans 183 residues: Pyruvoyl-dependent arginine decarboxylase (183 aa).

S44 bears the Pyruvic acid (Ser) mark.

Belongs to the PdaD family. It depends on pyruvate as a cofactor.

It carries out the reaction L-arginine + H(+) = agmatine + CO2. This chain is Pyruvoyl-dependent arginine decarboxylase, found in Nitrosopumilus maritimus (strain SCM1).